Reading from the N-terminus, the 655-residue chain is MDLLRILDTKPIPTIVDATTLGISGNTSGDYWLPTTMSLYQKELTDQIVSLHYSDILRYFETSHYKEDVILESMKTMCLNGSLVATHPYLLIDHYMPKSLITRDVPAHLAENSGKFSVLRDLINLVQEYETETAIVCRPGRTMDLLEALLLGNKVHIKRYDGHSIKSKQKANDFSCTVHLFSSEGINFTKYPIKSKARFDMLICLDTTVDTSQKDIQYLLQYKRERKGLERYAPIVRLVAINSIDHCRLFFGKKFDKNSREYLENVTAAMVILRDRLGTLPPDLRPIYSQKLHYLVEWLENPTVPWPLPDIYPLKQYTSMDVERSLLTEVHFKKSDDQLEDAFSNCSKKRGRHGANKAASSTVAGIEDNITPSFYSTKRLKNDYYTNPLKQDMTQLTGITTADNSSNVNYHLSSGIITHKLIQSMGEVYMDICVQKQELDDYSCLDDLQNDHLKFFSNEDEKIIKEYETVLRTNNENLNRSHELEVENNLKFSQIETLEKDIETLKGSLMAQGETLSKLKDAFVKTDNVQDEIEKEERVSVSRDTEKKYMEQEIKRAVDAIRENEEETHKLNEKQNGLESELKLKFEKSEISTKELNEKIGFLKKELKLENDLNEELVGQLSKTMDNLENLTIPRVRTQNGNTKKKSRAKKPGNV.

The stretch at 482-632 forms a coiled coil; that stretch reads HELEVENNLK…KTMDNLENLT (151 aa). The tract at residues 635 to 655 is disordered; that stretch reads RVRTQNGNTKKKSRAKKPGNV. The span at 643-655 shows a compositional bias: basic residues; the sequence is TKKKSRAKKPGNV.

The protein belongs to the HDA2/3 family. HDA3 subfamily. Heterodimer with HDA2. Component of the HDA1 histone deacetylase complex composed of at least one HDA1 homodimer and one HDA2/HDA3 heterodimer. Interacts with HDA1 and HDA3.

The protein localises to the nucleus. Its function is as follows. Required for activity of HDA1 histone deacetylase complex. The HDA1 histone deacetylase complex is responsible for the deacetylation of lysine residues on the N-terminal part of the core histones (H2A, H2B, H3 and H4). Histone deacetylation gives a tag for epigenetic repression and plays an important role in transcriptional regulation, cell cycle progression and developmental events. This chain is HDA1 complex subunit 3 (HDA3), found in Saccharomyces cerevisiae (strain ATCC 204508 / S288c) (Baker's yeast).